A 232-amino-acid chain; its full sequence is TIR domain-containing adapter molecule 2 (232 aa).

Residues 1–10 (MGIGKSKMDP) show a composition bias toward basic and acidic residues. The interval 1 to 71 (MGIGKSKMDP…VEERPEEDTE (71 aa)) is disordered. G2 carries the N-myristoyl glycine lipid modification. The span at 19-29 (KSQSVDTSQSH) shows a compositional bias: polar residues. A compositionally biased stretch (basic and acidic residues) spans 30–42 (HMSDSKQSEEISL). Positions 55–71 (PAEEQEGVEERPEEDTE) are enriched in acidic residues. Residues 70–226 (TEEEVFLKFV…AIWKETRNTV (157 aa)) enclose the TIR domain. At Y164 the chain carries Phosphotyrosine.

Homodimer. Interacts with TLR4, TICAM1, IRF3 and IRF7 in response to LPS. Interacts with IL1R1, IL1RAP, IRAK2, IRAK3 and TRAF6. Interacts with protein kinase-inactive mutants of IRAK1 and IRAK4. Isoform 1 interacts with isoform 2; the interaction occurs in late endosomes and disrupts the interaction between isoform 1 and TICAM1. Interacts with MYD88; the interaction decreases after IL-18 stimulation in a time-dependent manner. Interacts with IL18R1 and IL18RAP. Interacts with TLR2. Interacts with RAB11FIP2. Myristoylated. Required for membrane association which is critical for its ability to initiate efficient signaling. In terms of processing, phosphorylated by PRKCE in response to LPS. Phosphorylation is essential for its function. It is depleted from the membrane upon phosphorylation. Tyrosine phosphorylation is inhibited by phosphatase PTPN4.

It is found in the cytoplasm. It localises to the golgi apparatus. The protein resides in the cell membrane. Its subcellular location is the endoplasmic reticulum. The protein localises to the early endosome. It is found in the late endosome. It localises to the cell projection. The protein resides in the phagocytic cup. In terms of biological role, functions as a sorting adapter in different signaling pathways to facilitate downstream signaling leading to type I interferon induction. In TLR4 signaling, physically bridges TLR4 and TICAM1 and functionally transmits signal to TICAM1 in early endosomes after endocytosis of TLR4. In TLR2 signaling, physically bridges TLR2 and MYD88 and is required for the TLR2-dependent movement of MYD88 to endosomes following ligand engagement. Involved in IL-18 signaling and is proposed to function as a sorting adapter for MYD88 in IL-18 signaling during adaptive immune response. Forms a complex with RAB11FIP2 that is recruited to the phagosomes to promote the activation of the actin-regulatory GTPases RAC1 and CDC42 and subsequent phagocytosis of Gram-negative bacteria. The sequence is that of TIR domain-containing adapter molecule 2 (TICAM2) from Bos taurus (Bovine).